Reading from the N-terminus, the 328-residue chain is Nucleotide-binding protein BL0705 (328 aa).

The disordered stretch occupies residues 1 to 35 (MNQQTTNRDTGEAAATNAPANSATSTSTPDNQPTP). The span at 13–29 (AAATNAPANSATSTSTP) shows a compositional bias: low complexity. 46-53 (GMSGAGRS) contacts ATP. 101 to 104 (DVRS) is a binding site for GTP.

Belongs to the RapZ-like family.

Its function is as follows. Displays ATPase and GTPase activities. This Bifidobacterium longum (strain NCC 2705) protein is Nucleotide-binding protein BL0705.